The following is a 298-amino-acid chain: MIKYYDRKTQTYQIEKVAGEKMIRWTYSSPVGMRLLETVVKKRMCSSFYGWYLDRRISRRKIHPFVCKFDLDLSIAEKNLKDFSSFNDFFYRKLKPSARSIDPCQDSLISLGDGKLLAYEDINLDCLVQVKGLTYSLKELIKDPETASKYKRGTCLILRLCPTDYHRFHFIDSGICEPSHRIKGSYYSVNPVALQKVAKLFCENKREWSIFHSDHFGDILTIEVGATFVGSIIQSYTPHQPVARGDEKGYFKFGGSTVLLFFEENKIKIDPDIVEQTKLGYETYILFGEKIGVRHKGR.

Residues D113, H169, and S256 each act as charge relay system; for autoendoproteolytic cleavage activity in the active site. The Schiff-base intermediate with substrate; via pyruvic acid; for decarboxylase activity role is filled by S256. S256 is subject to Pyruvic acid (Ser); by autocatalysis.

Belongs to the phosphatidylserine decarboxylase family. PSD-B subfamily. Prokaryotic type II sub-subfamily. In terms of assembly, heterodimer of a large membrane-associated beta subunit and a small pyruvoyl-containing alpha subunit. Requires pyruvate as cofactor. Post-translationally, is synthesized initially as an inactive proenzyme. Formation of the active enzyme involves a self-maturation process in which the active site pyruvoyl group is generated from an internal serine residue via an autocatalytic post-translational modification. Two non-identical subunits are generated from the proenzyme in this reaction, and the pyruvate is formed at the N-terminus of the alpha chain, which is derived from the carboxyl end of the proenzyme. The autoendoproteolytic cleavage occurs by a canonical serine protease mechanism, in which the side chain hydroxyl group of the serine supplies its oxygen atom to form the C-terminus of the beta chain, while the remainder of the serine residue undergoes an oxidative deamination to produce ammonia and the pyruvoyl prosthetic group on the alpha chain. During this reaction, the Ser that is part of the protease active site of the proenzyme becomes the pyruvoyl prosthetic group, which constitutes an essential element of the active site of the mature decarboxylase.

The protein resides in the cell membrane. The enzyme catalyses a 1,2-diacyl-sn-glycero-3-phospho-L-serine + H(+) = a 1,2-diacyl-sn-glycero-3-phosphoethanolamine + CO2. It participates in phospholipid metabolism; phosphatidylethanolamine biosynthesis; phosphatidylethanolamine from CDP-diacylglycerol: step 2/2. In terms of biological role, catalyzes the formation of phosphatidylethanolamine (PtdEtn) from phosphatidylserine (PtdSer). This is Phosphatidylserine decarboxylase proenzyme from Desulfitobacterium hafniense (strain DSM 10664 / DCB-2).